We begin with the raw amino-acid sequence, 143 residues long: MLSPKRTKFRKQHCGNLKGISTRGNVICFGKFPLQALEPSWITSRQIEAGRRAITRYARRGGKLWIRIFPDKPITIRPAETRMGSGKGSPEYWVAVVKPGKILYEISGVSENIARAAMKIAAYKMPIRTQFITTSSLNKKQEI.

The protein belongs to the universal ribosomal protein uL16 family. Part of the 50S ribosomal subunit.

Its subcellular location is the plastid. It localises to the chloroplast. This chain is Large ribosomal subunit protein uL16c, found in Marchantia polymorpha (Common liverwort).